Reading from the N-terminus, the 121-residue chain is Protein MGF 110-5L (121 aa).

Positions 1 to 20 are cleaved as a signal peptide; sequence MLVIFLGILGLLANQVSSQL. N-linked (GlcNAc...) asparagine; by host glycans are attached at residues N62 and N116.

The protein belongs to the asfivirus MGF 110 family.

In African swine fever virus (isolate Portugal/Lis 57/1957) (ASFV), this protein is Protein MGF 110-5L.